We begin with the raw amino-acid sequence, 87 residues long: Small ribosomal subunit protein bS20 (87 aa).

The protein belongs to the bacterial ribosomal protein bS20 family.

Binds directly to 16S ribosomal RNA. This Clostridium botulinum (strain Eklund 17B / Type B) protein is Small ribosomal subunit protein bS20.